A 287-amino-acid chain; its full sequence is Phosphatidylserine decarboxylase proenzyme (287 aa).

Active-site charge relay system; for autoendoproteolytic cleavage activity residues include aspartate 90, histidine 147, and serine 253. Residue serine 253 is the Schiff-base intermediate with substrate; via pyruvic acid; for decarboxylase activity of the active site. The residue at position 253 (serine 253) is a Pyruvic acid (Ser); by autocatalysis.

This sequence belongs to the phosphatidylserine decarboxylase family. PSD-B subfamily. Prokaryotic type I sub-subfamily. As to quaternary structure, heterodimer of a large membrane-associated beta subunit and a small pyruvoyl-containing alpha subunit. The cofactor is pyruvate. Is synthesized initially as an inactive proenzyme. Formation of the active enzyme involves a self-maturation process in which the active site pyruvoyl group is generated from an internal serine residue via an autocatalytic post-translational modification. Two non-identical subunits are generated from the proenzyme in this reaction, and the pyruvate is formed at the N-terminus of the alpha chain, which is derived from the carboxyl end of the proenzyme. The autoendoproteolytic cleavage occurs by a canonical serine protease mechanism, in which the side chain hydroxyl group of the serine supplies its oxygen atom to form the C-terminus of the beta chain, while the remainder of the serine residue undergoes an oxidative deamination to produce ammonia and the pyruvoyl prosthetic group on the alpha chain. During this reaction, the Ser that is part of the protease active site of the proenzyme becomes the pyruvoyl prosthetic group, which constitutes an essential element of the active site of the mature decarboxylase.

The protein resides in the cell membrane. The catalysed reaction is a 1,2-diacyl-sn-glycero-3-phospho-L-serine + H(+) = a 1,2-diacyl-sn-glycero-3-phosphoethanolamine + CO2. Its pathway is phospholipid metabolism; phosphatidylethanolamine biosynthesis; phosphatidylethanolamine from CDP-diacylglycerol: step 2/2. Functionally, catalyzes the formation of phosphatidylethanolamine (PtdEtn) from phosphatidylserine (PtdSer). In Aliivibrio fischeri (strain ATCC 700601 / ES114) (Vibrio fischeri), this protein is Phosphatidylserine decarboxylase proenzyme.